A 356-amino-acid chain; its full sequence is Nuclear hormone receptor family member nhr-42 (356 aa).

The nuclear receptor DNA-binding region spans 7 to 82 (SQTCLICGDS…VGMRESAVLS (76 aa)). The NR C4-type zinc finger occupies 10 to 30 (CLICGDSADSLHFGALSCRAC). An NR C4-type; atypical zinc finger spans residues 48-70 (CDRQCKVDTGMRKLCASCRYDKC). Residues 108–356 (TSDSVLENLQ…HSSIFGNMAE (249 aa)) enclose the NR LBD domain.

This sequence belongs to the nuclear hormone receptor family.

Its subcellular location is the nucleus. Its function is as follows. Orphan nuclear receptor. The polypeptide is Nuclear hormone receptor family member nhr-42 (nhr-42) (Caenorhabditis elegans).